The sequence spans 247 residues: DNA polymerase sliding clamp (247 aa).

Belongs to the PCNA family. As to quaternary structure, homotrimer. The subunits circularize to form a toroid; DNA passes through its center. Replication factor C (RFC) is required to load the toroid on the DNA.

In terms of biological role, sliding clamp subunit that acts as a moving platform for DNA processing. Responsible for tethering the catalytic subunit of DNA polymerase and other proteins to DNA during high-speed replication. This is DNA polymerase sliding clamp from Methanocorpusculum labreanum (strain ATCC 43576 / DSM 4855 / Z).